The primary structure comprises 419 residues: Multidrug efflux pump Tap (419 aa).

12 helical membrane passes run 7–29 (GPAF…SIVA), 44–66 (ASIV…GTAV), 73–95 (RVSM…VAWG), 100–122 (AVNV…AGMT), 149–171 (ILNL…VGGI), 175–197 (WITA…EGAG), 218–240 (FVWN…ALYL), 260–282 (LGWA…AVLA), 289–308 (VTMS…IAFL), 313–335 (VIMV…YNYV), 348–370 (VVGV…AGPL), and 375–397 (GLHA…AIRL).

It belongs to the major facilitator superfamily. Drug:H(+) antiporter-3 (DHA3) (TC 2.A.1.21) family.

It is found in the cell inner membrane. With respect to regulation, inhibited by piperine, verapamil and verapamil analogs. Its function is as follows. Efflux pump that contributes to intrinsic antibiotic resistance. The pump uses the electrochemical gradient as a source of energy. Confers resistance to rifampicin. Confers low-level resistance to tetracycline and to several aminoglycosides, including streptomycin, gentamicin, 2'-N-ethylnetilmicin and 6'-N-ethylnetilmicin. The sequence is that of Multidrug efflux pump Tap from Mycobacterium tuberculosis (strain ATCC 25618 / H37Rv).